Reading from the N-terminus, the 273-residue chain is MNLTPEHAQKSSPMSWTVGGKTLNSRLLIGSALYPSPQAMQGAIEASGAEIVTVSLRRQSAGDQAGKTFWNMIKSLNCHVLPNTAGCHSAKEAITTAQMAREVFETNWIKLEVIGDQYNLQPDPFELLKATETLVNDGFEVFPYTTDDLVLAQRLVEAGCNILMPWGSPIGSGKGLMNPYNLNAIRQRFPELTLIVDAGIGKPSHAVQALEMGYNGILLNSAVALSPNPITMGKAFKSAVEAGVYAFDAGTMQERDLASPSTPVVGTPFWHQH.

The active-site Schiff-base intermediate with DXP is the Lys110. 1-deoxy-D-xylulose 5-phosphate-binding positions include Gly171, Ala198–Gly199, and Asn220–Ser221.

The protein belongs to the ThiG family. Homotetramer. Forms heterodimers with either ThiH or ThiS.

It localises to the cytoplasm. The catalysed reaction is [ThiS sulfur-carrier protein]-C-terminal-Gly-aminoethanethioate + 2-iminoacetate + 1-deoxy-D-xylulose 5-phosphate = [ThiS sulfur-carrier protein]-C-terminal Gly-Gly + 2-[(2R,5Z)-2-carboxy-4-methylthiazol-5(2H)-ylidene]ethyl phosphate + 2 H2O + H(+). It participates in cofactor biosynthesis; thiamine diphosphate biosynthesis. Catalyzes the rearrangement of 1-deoxy-D-xylulose 5-phosphate (DXP) to produce the thiazole phosphate moiety of thiamine. Sulfur is provided by the thiocarboxylate moiety of the carrier protein ThiS. In vitro, sulfur can be provided by H(2)S. The protein is Thiazole synthase of Hydrogenovibrio crunogenus (strain DSM 25203 / XCL-2) (Thiomicrospira crunogena).